A 59-amino-acid chain; its full sequence is Large ribosomal subunit protein uL30 (59 aa).

The protein belongs to the universal ribosomal protein uL30 family. As to quaternary structure, part of the 50S ribosomal subunit.

The sequence is that of Large ribosomal subunit protein uL30 from Escherichia coli (strain UTI89 / UPEC).